Here is a 962-residue protein sequence, read N- to C-terminus: Voltage-gated delayed rectifier potassium channel KCNH1 (962 aa).

The Cytoplasmic portion of the chain corresponds to 1 to 220 (MTMAGGRRGL…LHYCVFKTTW (220 aa)). The region spanning 14-94 (QNTFLENIVR…QTFENYEMNS (81 aa)) is the PAS domain. Positions 93–145 (NSFEILMYKKNRTPVWFFVKIAPIRNEQDKVVLFLCTFSDITAFKQPIEDDSC) constitute a PAC domain. Residues 151-162 (FARLTRALTSSR) form a required for phosphatidylinositol bisphosphate binding region. The helical transmembrane segment at 221-241 (DWIILILTFYTAILVPYNVSF) threads the bilayer. Over 242-248 (KTRQNNV) the chain is Extracellular. Residues 249–269 (AWLVVDSIVDVIFLVDIVLNF) traverse the membrane as a helical segment. Topologically, residues 270-290 (HTTFVGPAGEVISDPKLIRMN) are cytoplasmic. The chain crosses the membrane as a helical span at residues 291 to 309 (YLKTWFVIDLLSCLPYDVI). The Extracellular portion of the chain corresponds to 310-318 (NAFENVDEG). The chain crosses the membrane as a helical; Voltage-sensor span at residues 319 to 341 (ISSLFSSLKVVRLLRLGRVARKL). Residues 342-350 (DHYIEYGAA) are Cytoplasmic-facing. The helical transmembrane segment at 351–372 (VLVLLVCVFGLAAHWMACIWYS) threads the bilayer. At 373-421 (IGDYEIFDEDTKTIRNNSWLYQLALDIGTPYQFNGSGSGKWEGGPSKNS) the chain is on the extracellular side. N-linked (GlcNAc...) asparagine glycosylation is found at Asn-388 and Asn-406. Residues 422–443 (VYISSLYFTMTSLTSVGFGNIA) constitute an intramembrane region (pore-forming). Residues 436–441 (SVGFGN) carry the Selectivity filter motif. Topologically, residues 444 to 450 (PSTDIEK) are extracellular. Residues 451–471 (IFAVAIMMIGSLLYATIFGNV) traverse the membrane as a helical segment. The Cytoplasmic segment spans residues 472–962 (TTIFQQMYAN…ESDRDIFGAS (491 aa)). A calmodulin-binding region spans residues 646–743 (KRDALQKVLE…LDDLDVEKGN (98 aa)). The tract at residues 672–674 (YNL) is interaction with cyclic nucleotide-binding pocket. Positions 830-852 (ESMETLPERTKASGEATLKKTDS) are enriched in basic and acidic residues. Disordered stretches follow at residues 830–859 (ESME…GITK) and 933–962 (SRGS…FGAS). A CAD (involved in subunit assembly) region spans residues 897-937 (ATVLEVKHELKEDIKALNAKMTSIEKQLSEILRILMSRGSS). Polar residues predominate over residues 934–952 (RGSSQSPQDTCEVSRPQSP). 3 positions are modified to phosphoserine: Ser-947, Ser-951, and Ser-954. A compositionally biased stretch (basic and acidic residues) spans 953–962 (ESDRDIFGAS).

The protein belongs to the potassium channel family. H (Eag) (TC 1.A.1.20) subfamily. Kv10.1/KCNH1 sub-subfamily. As to quaternary structure, homomultimer. The potassium channel is composed of a homo- or heterotetrameric complex of pore-forming alpha subunits that can associate with modulating beta subunits. Heteromultimer with KCNH5/EAG2. Interacts with ALG10B. Interacts with RABEP1. Interacts (via C-terminus) with CTTN. Interacts (via cytoplasmic region) with Ca(2+)-bound calmodulin. In terms of processing, channel activity is regulated via tyrosine phosphorylation/dephosphorylation by SRC and PTPN6. In terms of tissue distribution, detected in cerebellum, at parallel fiber synapses on Purkinje cell spines. Detected in hippocampus neurons (at protein level). Detected in brain, but not in the other tissues tested; expression is highest in granular cells of the dentate gyrus, in hippocampus CA3 pyramidal cells, and in cerebellar granule cells. Detected in pituitary.

The protein resides in the cell membrane. The protein localises to the nucleus inner membrane. It is found in the cell projection. It localises to the dendrite. Its subcellular location is the axon. The protein resides in the presynaptic cell membrane. The protein localises to the perikaryon. It is found in the postsynaptic density membrane. It localises to the early endosome membrane. The catalysed reaction is K(+)(in) = K(+)(out). Its activity is regulated as follows. Channel activity is inhibited by interaction with Ca(2+)-bound calmodulin. Interaction of a single pore-forming alpha subunit with a calmodulin chain is sufficient to promote channel closure. Channel activity is not regulated by cyclic nucleotides. Channel activity is inhibited by binding intracellular phosphatidylinositol-3,5-bisphosphate and phosphatidylinositol-4,5-bisphosphate (PIP2), but is not inhibited by phosphatidylinositol 4-phosphate. In terms of biological role, pore-forming (alpha) subunit of a voltage-gated delayed rectifier potassium channel that mediates outward-rectifying potassium currents which, on depolarization, reaches a steady-state level and do not inactivate. The activation kinetics depend on the prepulse potential and external divalent cation concentration. With negative prepulses, the current activation is delayed and slowed down several fold, whereas more positive prepulses speed up activation. The time course of activation is biphasic with a fast and a slowly activating current component. Activates at more positive membrane potentials and exhibit a steeper activation curve. Channel properties are modulated by subunit assembly. Mediates IK(NI) current in myoblasts. Involved in the regulation of cell proliferation and differentiation, in particular adipogenic and osteogenic differentiation in bone marrow-derived mesenchymal stem cells (MSCs). This chain is Voltage-gated delayed rectifier potassium channel KCNH1, found in Rattus norvegicus (Rat).